A 561-amino-acid polypeptide reads, in one-letter code: Arginine--tRNA ligase (561 aa).

Positions 129–139 (ANPTGPLHVGH) match the 'HIGH' region motif.

Belongs to the class-I aminoacyl-tRNA synthetase family. As to quaternary structure, monomer.

It localises to the cytoplasm. The catalysed reaction is tRNA(Arg) + L-arginine + ATP = L-arginyl-tRNA(Arg) + AMP + diphosphate. The sequence is that of Arginine--tRNA ligase from Bordetella avium (strain 197N).